The following is a 625-amino-acid chain: Tumor necrosis factor receptor superfamily member 11A (625 aa).

A signal peptide spans 1 to 30 (MAPRARRRRQLPAPLLALCVLLVPLQVTLQ). Residues 31–214 (VTPPCTQERH…PKEAQAYLPS (184 aa)) are Extracellular-facing. Disulfide bonds link C35–C47, C48–C61, C51–C69, C72–C87, C93–C113, C115–C128, C125–C127, C134–C152, and C155–C170. 4 TNFR-Cys repeats span residues 35–69 (CTQE…DSVC), 72–113 (CGPD…PRRC), 115–152 (CTAG…DTVC), and 155–195 (CLLG…DVVC). An N-linked (GlcNAc...) asparagine glycan is attached at N106. 5 residues coordinate Na(+): C134, A135, F138, S161, and V163. An N-linked (GlcNAc...) asparagine glycan is attached at N175. Residues C176 and C195 are joined by a disulfide bond. Residues 215–234 (LIVLLLFISVVVVAAIIFGV) form a helical membrane-spanning segment. Topologically, residues 235 to 625 (YYRKGGKALT…HTQGSGQCAE (391 aa)) are cytoplasmic. Disordered stretches follow at residues 331–356 (TQGD…STGS), 388–413 (GTES…MPVS), and 479–524 (SMAE…FISS). Low complexity predominate over residues 499 to 511 (SGSSPSDQPPASG). A compositionally biased stretch (polar residues) spans 512–524 (NVTGNSNSTFISS). The tract at residues 532-537 (GDIIVV) is required for interaction with EEIG1 and osteoclast differentiation. A disordered region spans residues 542 to 625 (TSQEGPGSAE…HTQGSGQCAE (84 aa)). Low complexity predominate over residues 543–558 (SQEGPGSAEPESEPVG). Residues 561 to 571 (VQEETLAHRDS) are compositionally biased toward basic and acidic residues. S571 carries the post-translational modification Phosphoserine. Over residues 603-625 (RPVQEQGGAQTSLHTQGSGQCAE) the composition is skewed to polar residues.

Binds to the clefts between the subunits of the TNFSF11 ligand trimer to form a heterohexamer. Part of a complex composed of EEIG1, TNFRSF11A/RANK, PLCG2, GAB2, TEC and BTK; complex formation increases in the presence of TNFSF11/RANKL. Interacts with TRAF1, TRAF2, TRAF3, TRAF5 and TRAF6. Interacts (via cytoplasmic domain) with GAB2. Interacts (via cytoplasmic domain); with EEIG1 (via N-terminus); when in the presence of TNFSF11/RANKL. As to expression, ubiquitous expression with high levels in trabecular bone, thymus, small intestine, lung, brain and kidney. Weakly expressed in spleen and bone marrow.

It is found in the cell membrane. Its subcellular location is the membrane raft. Receptor for TNFSF11/RANKL/TRANCE/OPGL; essential for RANKL-mediated osteoclastogenesis. Its interaction with EEIG1 promotes osteoclastogenesis via facilitating the transcription of NFATC1 and activation of PLCG2. Involved in the regulation of interactions between T-cells and dendritic cells. In Mus musculus (Mouse), this protein is Tumor necrosis factor receptor superfamily member 11A (Tnfrsf11a).